A 578-amino-acid chain; its full sequence is Proline--tRNA ligase (578 aa).

This sequence belongs to the class-II aminoacyl-tRNA synthetase family. ProS type 1 subfamily. As to quaternary structure, homodimer.

The protein resides in the cytoplasm. The catalysed reaction is tRNA(Pro) + L-proline + ATP = L-prolyl-tRNA(Pro) + AMP + diphosphate. Functionally, catalyzes the attachment of proline to tRNA(Pro) in a two-step reaction: proline is first activated by ATP to form Pro-AMP and then transferred to the acceptor end of tRNA(Pro). As ProRS can inadvertently accommodate and process non-cognate amino acids such as alanine and cysteine, to avoid such errors it has two additional distinct editing activities against alanine. One activity is designated as 'pretransfer' editing and involves the tRNA(Pro)-independent hydrolysis of activated Ala-AMP. The other activity is designated 'posttransfer' editing and involves deacylation of mischarged Ala-tRNA(Pro). The misacylated Cys-tRNA(Pro) is not edited by ProRS. This Burkholderia orbicola (strain AU 1054) protein is Proline--tRNA ligase.